The sequence spans 71 residues: Conotoxin De13.1 (71 aa).

The signal sequence occupies residues 1–19 (MSGMGVLLLVLLLVMPLAA). Positions 20 to 35 (FHQDGEGEATRRSGGL) are excised as a propeptide. 4-hydroxyproline occurs at positions 40 and 44. Trp-51 carries the post-translational modification 6'-bromotryptophan. Glu-52 is subject to 4-carboxyglutamate. At Lys-55 the chain carries 5-hydroxylysine. Pro-58 carries the 4-hydroxyproline modification. His-69 carries the post-translational modification Histidine amide.

The protein belongs to the conotoxin G superfamily. Contains 4 disulfide bonds. In terms of tissue distribution, expressed by the venom duct.

The protein resides in the secreted. This Conasprella delessertii (Sozon's cone) protein is Conotoxin De13.1.